The following is a 368-amino-acid chain: Probable endopolygalacturonase A (368 aa).

An N-terminal signal peptide occupies residues 1–18; the sequence is MRSVELLSLAALGSLVAA. Positions 19-31 are excised as a propeptide; the sequence is APAPSRVSDLTKR. The cysteines at positions 35 and 50 are disulfide-linked. 7 PbH1 repeats span residues 140 to 162, 167 to 192, 193 to 214, 215 to 235, 244 to 265, 273 to 295, and 307 to 352; these read LEDS…SVQA, LIDI…DISE, STGV…AINS, GENI…SIGS, VKNV…RIKT, VSEV…VIEQ, and TTGV…DITG. Asp-207 (proton donor) is an active-site residue. A disulfide bond links Cys-209 and Cys-225. The active site involves His-229. N-linked (GlcNAc...) asparagine glycosylation is present at Asn-246. 2 disulfides stabilise this stretch: Cys-335–Cys-340 and Cys-359–Cys-368.

The protein belongs to the glycosyl hydrolase 28 family.

Its subcellular location is the secreted. It catalyses the reaction (1,4-alpha-D-galacturonosyl)n+m + H2O = (1,4-alpha-D-galacturonosyl)n + (1,4-alpha-D-galacturonosyl)m.. Involved in maceration and soft-rotting of plant tissue. Hydrolyzes the 1,4-alpha glycosidic bonds of de-esterified pectate in the smooth region of the plant cell wall. The chain is Probable endopolygalacturonase A (pgaA) from Neosartorya fischeri (strain ATCC 1020 / DSM 3700 / CBS 544.65 / FGSC A1164 / JCM 1740 / NRRL 181 / WB 181) (Aspergillus fischerianus).